We begin with the raw amino-acid sequence, 373 residues long: 3-dehydroquinate synthase (373 aa).

Residues 120–124 (GVVGD), 144–145 (TT), lysine 157, lysine 166, and 184–187 (FLKT) each bind NAD(+). Zn(2+)-binding residues include glutamate 199, histidine 262, and histidine 278.

It belongs to the sugar phosphate cyclases superfamily. Dehydroquinate synthase family. The cofactor is NAD(+). It depends on Co(2+) as a cofactor. Zn(2+) is required as a cofactor.

The protein resides in the cytoplasm. It carries out the reaction 7-phospho-2-dehydro-3-deoxy-D-arabino-heptonate = 3-dehydroquinate + phosphate. Its pathway is metabolic intermediate biosynthesis; chorismate biosynthesis; chorismate from D-erythrose 4-phosphate and phosphoenolpyruvate: step 2/7. Catalyzes the conversion of 3-deoxy-D-arabino-heptulosonate 7-phosphate (DAHP) to dehydroquinate (DHQ). The sequence is that of 3-dehydroquinate synthase from Clostridium tetani (strain Massachusetts / E88).